We begin with the raw amino-acid sequence, 306 residues long: tRNA dimethylallyltransferase 2 (306 aa).

Residue 11–18 (GPTASGKT) coordinates ATP. 13 to 18 (TASGKT) provides a ligand contact to substrate. The interaction with substrate tRNA stretch occupies residues 36–39 (DSRQ).

It belongs to the IPP transferase family. In terms of assembly, monomer. Mg(2+) serves as cofactor.

It catalyses the reaction adenosine(37) in tRNA + dimethylallyl diphosphate = N(6)-dimethylallyladenosine(37) in tRNA + diphosphate. Its function is as follows. Catalyzes the transfer of a dimethylallyl group onto the adenine at position 37 in tRNAs that read codons beginning with uridine, leading to the formation of N6-(dimethylallyl)adenosine (i(6)A). The chain is tRNA dimethylallyltransferase 2 from Bacteroides fragilis (strain ATCC 25285 / DSM 2151 / CCUG 4856 / JCM 11019 / LMG 10263 / NCTC 9343 / Onslow / VPI 2553 / EN-2).